The sequence spans 535 residues: MALQAAYEYLQQAVGHGAWSSTQTLTLLLIAVPTVLLLLASLAKSTSSSGRGKPPLPPSPPGTLPIVGHLHHIGPQTHISLQELVAKYGHNGFLFLRAGAVPTLIVSSPSAAEAVMRTHDHICASRPWSMASHILRYNTCDVAFSPLGEYWQQTRKLMNTHLLSNKKVYSFRHGREEEVCLVVDNLREAAAKSPSTAVDMSEVLAAYTNDVVSRSVLGSTHRKKGRNTLFREMTMTNVDLLVGFNLEYYIPRWPLTDLLFRLVCWKVTRHLKRWDALLEEVIHEHVEMRKLSGDKEKESDDFIDIFLSRYEEYGFTMDNVKSLLMNVFEAAIETSYLVLESAMAELMNHRRVMKKLQAEVRAYGAEKKLDMIREDDLSSLPYLKASMKEALRLHPPGPLLLPHYSTADCQIDGYHIPANPRVLVNGWAIGRDPAVWEKPEEFMPERFMRDGWDKSNSYSGQDFRYLPFGSGRRICPGANFGLATMEIMLANLMYHFDWEVPNEKEDGCWKVSMDEKFGLMLRRNELLYLVPRASS.

Residues glutamine 23–alanine 43 form a helical membrane-spanning segment. Cysteine 475 provides a ligand contact to heme.

This sequence belongs to the cytochrome P450 family. Heme serves as cofactor.

The protein resides in the membrane. The protein operates within secondary metabolite biosynthesis; 2,4-dihydroxy-1,4-benzoxazin-3-one biosynthesis; 2,4-dihydroxy-1,4-benzoxazin-3-one from indoleglycerol phosphate: step 5/5. Functionally, catalyzes the conversion of 2-hydroxy-1,4-benzoxazin-3-one (HBOA) to 2,4-dihydroxy-1,4-benzoxazin-3-one (DIBOA). The sequence is that of Cytochrome P450 71C3 (CYP71C3) from Zea mays (Maize).